Consider the following 126-residue polypeptide: Fluoride-specific ion channel FluC (126 aa).

Transmembrane regions (helical) follow at residues 5–25 (ILCV…FYFG), 34–54 (YIFI…GFVL), 71–91 (VTGL…NAVF), and 100–120 (FFLN…LGIY). Na(+) contacts are provided by glycine 76 and threonine 79.

It belongs to the fluoride channel Fluc/FEX (TC 1.A.43) family.

It is found in the cell inner membrane. It carries out the reaction fluoride(in) = fluoride(out). Na(+) is not transported, but it plays an essential structural role and its presence is essential for fluoride channel function. Functionally, fluoride-specific ion channel. Important for reducing fluoride concentration in the cell, thus reducing its toxicity. The chain is Fluoride-specific ion channel FluC from Campylobacter hominis (strain ATCC BAA-381 / DSM 21671 / CCUG 45161 / LMG 19568 / NCTC 13146 / CH001A).